Here is a 514-residue protein sequence, read N- to C-terminus: Na(+)/H(+) antiporter NhaB (514 aa).

The next 12 helical transmembrane spans lie at 23–43 (LALL…PFIA), 52–72 (IFTL…LLAI), 97–117 (LLLM…LFIF), 120–140 (LLLS…AAAF), 144–164 (FLDA…FYGI), 202–222 (LMMH…VGEP), 238–258 (FFLR…LTCL), 303–323 (ALIG…VGLI), 353–373 (FTAL…QSLF), 391–411 (LFYL…VGTI), 447–467 (ATPN…APLI), and 475–495 (VWMA…CVEF).

The protein belongs to the NhaB Na(+)/H(+) (TC 2.A.34) antiporter family.

It is found in the cell inner membrane. It catalyses the reaction 2 Na(+)(in) + 3 H(+)(out) = 2 Na(+)(out) + 3 H(+)(in). Na(+)/H(+) antiporter that extrudes sodium in exchange for external protons. The polypeptide is Na(+)/H(+) antiporter NhaB (Escherichia fergusonii (strain ATCC 35469 / DSM 13698 / CCUG 18766 / IAM 14443 / JCM 21226 / LMG 7866 / NBRC 102419 / NCTC 12128 / CDC 0568-73)).